The following is a 585-amino-acid chain: 2-succinyl-5-enolpyruvyl-6-hydroxy-3-cyclohexene-1-carboxylate synthase (585 aa).

It belongs to the TPP enzyme family. MenD subfamily. As to quaternary structure, homodimer. Mg(2+) serves as cofactor. The cofactor is Mn(2+). Requires thiamine diphosphate as cofactor.

It catalyses the reaction isochorismate + 2-oxoglutarate + H(+) = 5-enolpyruvoyl-6-hydroxy-2-succinyl-cyclohex-3-ene-1-carboxylate + CO2. It functions in the pathway quinol/quinone metabolism; 1,4-dihydroxy-2-naphthoate biosynthesis; 1,4-dihydroxy-2-naphthoate from chorismate: step 2/7. Its pathway is cofactor biosynthesis; phylloquinone biosynthesis. Its function is as follows. Catalyzes the thiamine diphosphate-dependent decarboxylation of 2-oxoglutarate and the subsequent addition of the resulting succinic semialdehyde-thiamine pyrophosphate anion to isochorismate to yield 2-succinyl-5-enolpyruvyl-6-hydroxy-3-cyclohexene-1-carboxylate (SEPHCHC). In Crocosphaera subtropica (strain ATCC 51142 / BH68) (Cyanothece sp. (strain ATCC 51142)), this protein is 2-succinyl-5-enolpyruvyl-6-hydroxy-3-cyclohexene-1-carboxylate synthase.